The chain runs to 403 residues: Large ribosomal subunit protein uL3 (403 aa).

The disordered stretch occupies residues methionine 1 to serine 38. Serine 13 is subject to Phosphoserine. The span at proline 18 to serine 31 shows a compositional bias: basic residues. A Glycyl lysine isopeptide (Lys-Gly) (interchain with G-Cter in SUMO2) cross-link involves residue lysine 39. Lysine 136 carries the post-translational modification N6-acetyllysine. Residues lysine 224 and lysine 226 each participate in a glycyl lysine isopeptide (Lys-Gly) (interchain with G-Cter in SUMO2) cross-link. Histidine 245 is subject to Tele-methylhistidine. An N6-acetyllysine; alternate mark is found at lysine 286 and lysine 294. Lysine 286 participates in a covalent cross-link: Glycyl lysine isopeptide (Lys-Gly) (interchain with G-Cter in SUMO2); alternate. Residue lysine 294 forms a Glycyl lysine isopeptide (Lys-Gly) (interchain with G-Cter in SUMO1); alternate linkage. Serine 304 is subject to Phosphoserine. Position 366 is an N6-acetyllysine; alternate (lysine 366). Lysine 366 is covalently cross-linked (Glycyl lysine isopeptide (Lys-Gly) (interchain with G-Cter in SUMO2); alternate). Lysine 373 carries the post-translational modification N6-acetyllysine. Glycyl lysine isopeptide (Lys-Gly) (interchain with G-Cter in SUMO2) cross-links involve residues lysine 386, lysine 393, and lysine 399.

Belongs to the universal ribosomal protein uL3 family. Component of the large ribosomal subunit. Interacts with DHX33. Post-translationally, constitutively monomethylated at His-245 by METTL18. Methylation at His-245 regulates translation elongation by slowing ribosome traversal on tyrosine codons: slower elongation provides enough time for proper folding of synthesized proteins and prevents cellular aggregation of tyrosine-rich proteins It is not required for incorporation of RPL3 into ribosomes.

It localises to the nucleus. The protein resides in the nucleolus. Its subcellular location is the cytoplasm. Component of the large ribosomal subunit. The ribosome is a large ribonucleoprotein complex responsible for the synthesis of proteins in the cell. This is Large ribosomal subunit protein uL3 (RPL3) from Bos taurus (Bovine).